Here is a 298-residue protein sequence, read N- to C-terminus: Anamorsin homolog (298 aa).

The segment at 1–143 (MTQLIITYQS…IKAEKPSWKP (143 aa)) is N-terminal SAM-like domain. The segment at 143-162 (PEEGKVLVDDIDLEGSVPDI) is linker. [2Fe-2S] cluster is bound by residues C175, C182, C185, and C187. A fe-S binding site A region spans residues 175-187 (CKSKERACNNCNC). C218, C221, C229, and C232 together coordinate [4Fe-4S] cluster. Short sequence motifs (cx2C motif) lie at residues 218-221 (CGNC) and 229-232 (CSGC). Residues 218 to 232 (CGNCYLGDAFRCSGC) form a fe-S binding site B region.

It belongs to the anamorsin family. In terms of assembly, monomer. [2Fe-2S] cluster is required as a cofactor. [4Fe-4S] cluster serves as cofactor.

Its subcellular location is the cytoplasm. It is found in the mitochondrion intermembrane space. Its function is as follows. Component of the cytosolic iron-sulfur (Fe-S) protein assembly (CIA) machinery. Required for the maturation of extramitochondrial Fe-S proteins. Part of an electron transfer chain functioning in an early step of cytosolic Fe-S biogenesis, facilitating the de novo assembly of a [4Fe-4S] cluster on the cytosolic Fe-S scaffold complex. Electrons are transferred from NADPH via a FAD- and FMN-containing diflavin oxidoreductase. Together with the diflavin oxidoreductase, also required for the assembly of the diferric tyrosyl radical cofactor of ribonucleotide reductase (RNR), probably by providing electrons for reduction during radical cofactor maturation in the catalytic small subunit. The chain is Anamorsin homolog from Cryptosporidium hominis.